A 338-amino-acid polypeptide reads, in one-letter code: Mugineic-acid 3-dioxygenase (338 aa).

A Fe2OG dioxygenase domain is found at 180–283 (DISGGRVVVD…RLSVASFIVP (104 aa)). The Fe cation site is built by H208, D210, and H264. R274 contacts 2-oxoglutarate.

This sequence belongs to the iron/ascorbate-dependent oxidoreductase family. Requires Fe(2+) as cofactor. L-ascorbate serves as cofactor. As to expression, expressed in roots, but not in leaves.

The enzyme catalyses mugineate + 2-oxoglutarate + O2 = 3-epihydroxymugineate + succinate + CO2 + H(+). It carries out the reaction 2'-deoxymugineate + 2-oxoglutarate + O2 = 3-epihydroxy-2'-deoxymugineate + succinate + CO2 + H(+). Its function is as follows. Involved in the biosynthesis of mugineic acid family of phytosiderophores. Hydroxylates the C-3 positions of mugineic acid (MA) and 2'-deoxymugineic acid (DMA). May be involved in boron tolerance. The chain is Mugineic-acid 3-dioxygenase (IDS2) from Hordeum vulgare (Barley).